A 21-amino-acid chain; its full sequence is Major outer membrane protein (21 aa).

Disulfide bond interactions within and between MOMP molecules and other components form high molecular-weight oligomers.

It localises to the cell outer membrane. Functionally, structural rigidity of the outer membrane of elementary bodies and porin forming, permitting diffusion of solutes through the intracellular reticulate body membrane. This Actinobacillus equuli protein is Major outer membrane protein.